The following is a 211-amino-acid chain: Superoxide dismutase [Cu-Zn], chloroplastic (211 aa).

The transit peptide at 1-57 (MQAILAAAMAAQTLLFSATAPPASLFQSPSSARPFHSLRLAAGPAGAAAARALVVAD) directs the protein to the chloroplast. Cu cation-binding residues include His-103, His-105, and His-120. Cysteines 114 and 203 form a disulfide. Zn(2+)-binding residues include His-120, His-128, His-137, and Asp-140. Cu cation is bound at residue His-177.

It belongs to the Cu-Zn superoxide dismutase family. As to quaternary structure, homotetramer. It depends on Cu cation as a cofactor. The cofactor is Zn(2+).

It localises to the plastid. The protein resides in the chloroplast. The enzyme catalyses 2 superoxide + 2 H(+) = H2O2 + O2. Its function is as follows. Destroys radicals which are normally produced within the cells and which are toxic to biological systems. This is Superoxide dismutase [Cu-Zn], chloroplastic (SODCP) from Oryza sativa subsp. japonica (Rice).